We begin with the raw amino-acid sequence, 347 residues long: Phosphoribosylformylglycinamidine cyclo-ligase (347 aa).

The protein belongs to the AIR synthase family.

The protein resides in the cytoplasm. It carries out the reaction 2-formamido-N(1)-(5-O-phospho-beta-D-ribosyl)acetamidine + ATP = 5-amino-1-(5-phospho-beta-D-ribosyl)imidazole + ADP + phosphate + H(+). Its pathway is purine metabolism; IMP biosynthesis via de novo pathway; 5-amino-1-(5-phospho-D-ribosyl)imidazole from N(2)-formyl-N(1)-(5-phospho-D-ribosyl)glycinamide: step 2/2. This is Phosphoribosylformylglycinamidine cyclo-ligase from Prochlorococcus marinus (strain MIT 9312).